The sequence spans 55 residues: Large ribosomal subunit protein bL32 (55 aa).

It belongs to the bacterial ribosomal protein bL32 family.

The chain is Large ribosomal subunit protein bL32 from Aeromonas hydrophila subsp. hydrophila (strain ATCC 7966 / DSM 30187 / BCRC 13018 / CCUG 14551 / JCM 1027 / KCTC 2358 / NCIMB 9240 / NCTC 8049).